The primary structure comprises 151 residues: MAVTIDPKTFYANPPPGKPFYVRFEVPNDVAEKALEILSIARQTGKIKKGTNETTKAVERGLAKLVLIAEDVDPPEVVAHLPLLCEEKKVPYVYVPSKEKLGKAAGINVSAAAAVVIEPGQAAGELEALVSKINEVRAKHGLNAIPVPAKR.

Belongs to the eukaryotic ribosomal protein eL8 family. In terms of assembly, part of the 50S ribosomal subunit. Probably part of the RNase P complex.

Its subcellular location is the cytoplasm. Functionally, multifunctional RNA-binding protein that recognizes the K-turn motif in ribosomal RNA, the RNA component of RNase P, box H/ACA, box C/D and box C'/D' sRNAs. This chain is Large ribosomal subunit protein eL8, found in Pyrobaculum aerophilum (strain ATCC 51768 / DSM 7523 / JCM 9630 / CIP 104966 / NBRC 100827 / IM2).